A 105-amino-acid chain; its full sequence is Large ribosomal subunit protein bL21 (105 aa).

Belongs to the bacterial ribosomal protein bL21 family. Part of the 50S ribosomal subunit. Contacts protein L20.

Functionally, this protein binds to 23S rRNA in the presence of protein L20. In Rhizobium etli (strain CIAT 652), this protein is Large ribosomal subunit protein bL21.